The following is a 234-amino-acid chain: UPF0502 protein Bphyt_5265 (234 aa).

It belongs to the UPF0502 family.

In Paraburkholderia phytofirmans (strain DSM 17436 / LMG 22146 / PsJN) (Burkholderia phytofirmans), this protein is UPF0502 protein Bphyt_5265.